A 236-amino-acid chain; its full sequence is H2HPP isomerase (236 aa).

Cupin type-1 domains are found at residues 40-106 (YVPP…AIDI) and 151-215 (NIPG…SKSV). Histidine 50, histidine 52, glutamine 56, histidine 91, histidine 162, histidine 164, glutamine 168, and histidine 202 together coordinate a divalent metal cation. Tyrosine 223 provides a ligand contact to substrate.

Monomer. The cofactor is Fe(2+). Co(2+) is required as a cofactor.

The protein localises to the cytoplasm. The enzyme catalyses 3-[(4R)-4-hydroxycyclohexa-1,5-dien-1-yl]-2-oxopropanoate = 3-[(1E,4R)-4-hydroxycyclohex-2-en-1-ylidene]pyruvate. It functions in the pathway antibiotic biosynthesis; bacilysin biosynthesis. In terms of biological role, part of the bacABCDEF operon responsible for the biosynthesis of the nonribosomally synthesized dipeptide antibiotic bacilysin, composed of L-alanine and L-anticapsin. Bacilysin is an irreversible inactivator of the glutaminase domain of glucosamine synthetase. BacB catalyzes the allylic isomerization of the endocyclic-delta(4),delta(8)-7R-dihydro-hydroxyphenylpyruvate (en-H2HPP) to generate a mixture of 3E,7R- and 3Z, 7R-olefins of the exocyclic-delta(3),delta(5)-dihydro-hydroxyphenylpyruvate (ex-H2HPP). This is H2HPP isomerase from Bacillus subtilis.